Consider the following 350-residue polypeptide: Uroporphyrinogen decarboxylase (350 aa).

Substrate is bound by residues arginine 27–arginine 31, phenylalanine 46, aspartate 76, tyrosine 152, serine 207, and histidine 321.

It belongs to the uroporphyrinogen decarboxylase family. Homodimer.

It is found in the cytoplasm. The enzyme catalyses uroporphyrinogen III + 4 H(+) = coproporphyrinogen III + 4 CO2. It functions in the pathway porphyrin-containing compound metabolism; protoporphyrin-IX biosynthesis; coproporphyrinogen-III from 5-aminolevulinate: step 4/4. Its function is as follows. Catalyzes the decarboxylation of four acetate groups of uroporphyrinogen-III to yield coproporphyrinogen-III. This chain is Uroporphyrinogen decarboxylase, found in Listeria welshimeri serovar 6b (strain ATCC 35897 / DSM 20650 / CCUG 15529 / CIP 8149 / NCTC 11857 / SLCC 5334 / V8).